A 275-amino-acid chain; its full sequence is Structure-specific endonuclease subunit SLX1 (275 aa).

The GIY-YIG domain occupies 12 to 95; it reads RFFGVYLLYC…QHPHASRRLA (84 aa). Positions 148–161 are enriched in pro residues; it reads HVPLAFGPPPPQAP. The disordered stretch occupies residues 148 to 179; the sequence is HVPLAFGPPPPQAPAPRRRAGPFDDAEPEPDQ. Residues 186–238 form an SLX1-type zinc finger; sequence CSLCAQTIQDEEGPLCCPHPGCLLRAHVICLAEEFLQEEPGQLLPLEGQCPCC.

It belongs to the SLX1 family. In terms of assembly, forms a heterodimer with SLX4. Requires a divalent metal cation as cofactor.

The protein resides in the nucleus. Its function is as follows. Catalytic subunit of the SLX1-SLX4 structure-specific endonuclease that resolves DNA secondary structures generated during DNA repair and recombination. Has endonuclease activity towards branched DNA substrates, introducing single-strand cuts in duplex DNA close to junctions with ss-DNA. Has a preference for 5'-flap structures, and promotes symmetrical cleavage of static and migrating Holliday junctions (HJs). Resolves HJs by generating two pairs of ligatable, nicked duplex products. This Homo sapiens (Human) protein is Structure-specific endonuclease subunit SLX1.